The chain runs to 437 residues: Enolase (437 aa).

Substrate-binding residues include His160 and Glu169. The active-site Proton donor is the Glu212. Mg(2+)-binding residues include Asp247, Glu296, and Asp321. The substrate site is built by Glu296 and Asp321. Lys346 functions as the Proton acceptor in the catalytic mechanism. Residues 373 to 376 (SHRS) and Lys397 contribute to the substrate site.

The protein belongs to the enolase family. As to quaternary structure, homodimer. The cofactor is Mg(2+).

It is found in the cytoplasm. The enzyme catalyses (2R)-2-phosphoglycerate = phosphoenolpyruvate + H2O. It participates in carbohydrate degradation; glycolysis; pyruvate from D-glyceraldehyde 3-phosphate: step 4/5. The protein is Enolase (ENO) of Eremothecium gossypii (strain ATCC 10895 / CBS 109.51 / FGSC 9923 / NRRL Y-1056) (Yeast).